The following is a 486-amino-acid chain: NADH-quinone oxidoreductase subunit N (486 aa).

The next 14 helical transmembrane spans lie at 8-28 (LTALLPLLIIMLTVITVILSI), 36-56 (FVAVFSILGLIFALCSLYFLI), 74-94 (ILYIGMILISSICTCIFSYPW), 104-124 (EFYLLVIISTLGAISLTISHH), 125-145 (MASFFINIELISLPMFGLIAY), 160-180 (IILSGVSSSFLLFGIAWVYSI), 201-221 (ILVVLFGISMILLSLFFKLSI), 239-259 (VLSFFSTAGKISVFSVLLNFL), 269-289 (VIYFILSLIIILSILVGNLMA), 298-318 (FLGYTSISQIGYLLIVLLVSH), 329-349 (AIYLCGYLFSNIACLGIVNLI), 376-396 (SVLTLVLISSAGIPMTLGFIG), 410-432 (WLIGFAFLIGSLLGLYCYLRIIL), and 459-479 (IVICISGIILLALGIYPNPLI).

Belongs to the complex I subunit 2 family. In terms of assembly, NDH-1 is composed of 13 different subunits. Subunits NuoA, H, J, K, L, M, N constitute the membrane sector of the complex.

The protein localises to the cell membrane. It catalyses the reaction a quinone + NADH + 5 H(+)(in) = a quinol + NAD(+) + 4 H(+)(out). In terms of biological role, NDH-1 shuttles electrons from NADH, via FMN and iron-sulfur (Fe-S) centers, to quinones in the respiratory chain. The immediate electron acceptor for the enzyme in this species is believed to be ubiquinone. Couples the redox reaction to proton translocation (for every two electrons transferred, four hydrogen ions are translocated across the cytoplasmic membrane), and thus conserves the redox energy in a proton gradient. This Buchnera aphidicola subsp. Acyrthosiphon pisum (strain APS) (Acyrthosiphon pisum symbiotic bacterium) protein is NADH-quinone oxidoreductase subunit N.